The primary structure comprises 303 residues: Quinolinate synthase (303 aa).

The iminosuccinate site is built by His24 and Ser41. Residue Cys86 participates in [4Fe-4S] cluster binding. Residues 112-114 and Ser129 contribute to the iminosuccinate site; that span reads YIN. Cys172 lines the [4Fe-4S] cluster pocket. Residues 198-200 and Thr215 each bind iminosuccinate; that span reads HPE. Residue Cys260 participates in [4Fe-4S] cluster binding.

Belongs to the quinolinate synthase family. Type 2 subfamily. Requires [4Fe-4S] cluster as cofactor.

It localises to the cytoplasm. The enzyme catalyses iminosuccinate + dihydroxyacetone phosphate = quinolinate + phosphate + 2 H2O + H(+). Its pathway is cofactor biosynthesis; NAD(+) biosynthesis; quinolinate from iminoaspartate: step 1/1. Catalyzes the condensation of iminoaspartate with dihydroxyacetone phosphate to form quinolinate. The protein is Quinolinate synthase of Caldicellulosiruptor bescii (strain ATCC BAA-1888 / DSM 6725 / KCTC 15123 / Z-1320) (Anaerocellum thermophilum).